The following is a 193-amino-acid chain: Outer membrane lipoprotein DolP (193 aa).

The signal sequence occupies residues Met1–Gly21. Residue Cys22 is the site of N-palmitoyl cysteine attachment. Cys22 carries the S-diacylglycerol cysteine lipid modification. BON domains are found at residues Asp48–Pro117 and Lys126–Asp193.

Belongs to the lipoprotein DolP family.

Its subcellular location is the cell outer membrane. Plays an important role in maintaining outer membrane integrity. This is Outer membrane lipoprotein DolP from Haemophilus influenzae (strain ATCC 51907 / DSM 11121 / KW20 / Rd).